The following is a 152-amino-acid chain: 3-dehydroquinate dehydratase (152 aa).

Y26 serves as the catalytic Proton acceptor. Residues N78, H84, and D91 each contribute to the substrate site. The Proton donor role is filled by H104. Substrate is bound by residues 105–106 and R115; that span reads IS.

Belongs to the type-II 3-dehydroquinase family. As to quaternary structure, homododecamer.

It carries out the reaction 3-dehydroquinate = 3-dehydroshikimate + H2O. It functions in the pathway metabolic intermediate biosynthesis; chorismate biosynthesis; chorismate from D-erythrose 4-phosphate and phosphoenolpyruvate: step 3/7. In terms of biological role, catalyzes a trans-dehydration via an enolate intermediate. The sequence is that of 3-dehydroquinate dehydratase from Buchnera aphidicola subsp. Cinara cedri (strain Cc).